The primary structure comprises 86 residues: Large ribosomal subunit protein bL27 (86 aa).

Positions 1–24 (MAHKKGTGSTRNGRDSNSKRLGVK) are disordered.

It belongs to the bacterial ribosomal protein bL27 family.

In Prochlorococcus marinus (strain MIT 9301), this protein is Large ribosomal subunit protein bL27.